An 872-amino-acid chain; its full sequence is MKPSEAREHAIRKIKEYLERRHKQQFKALFGCLTINIYLKIFTLISTPDLCNCRLVCRKFQQLCDYNSIYVKKLLLMNAWDVTLSRKLYYESQDGMSQANMSSNTSKGFHLQSSDKKYADSDRPKLSSSSLLSLPDQKIPFPVDYSTVQGKQVVLTVLDCVSQRVEFARLDYIKVWRALAPIYRNLAYASNTIDPIAFSAFRTPEEQSKVLKYLIRFGNSYPYGTYRQAMQNAILDMASLFEQACLDEFELGLHSRNLDLLRKFSHVLHDFSGPNAYVSMYLAKQTDFVRSFFHFDPYSLFISNNLEEIHINWNILESVVNDTIKLLESESKFSEATLPEPELVQVPYAKDILGNSLKDYVISICEHIGEEETELFLVFISGFYGLCKKFFSIPNGPALVDTIFQPQIDIFISQELHYFKTVGWSLVDQWDQKLEEKEDATECFFYKNVSQNTAKNNFLETFKNVMLLPVSLFTIPSENNSASNLAEKAIEQKEEEDPELSKLDAARFVPANIYVSKDRLKHLPTTELAAQAAVLDSKLEGISTMFSLELALKIVHLCKVSLARAKVFMGTSVPQDDDIKGLSKDLFVQLLRELGQGHLKHGFDRAIEHLSSFDPRRDFSSNTVEPVVKFLELINVGDMIQQMMDSFFNEEMSPICVKDDMFDPAIAEKKKFEQLLDERAAFGLHKGINVLIEHADFLLETKTPMNLFSDQTIGSITNTIEPTAAAKNVVQFLGFHMRILVGRADHEILDVFYKEVGMRLFDSLTRYIKSHKFSVDGGLKLLSDCNLYYEFIHSLHQSSLLPYFKTLKEIAHLFIIDGKNAEEIGKLATDTSRFSSAFHTEEVYEILHSRIDWLNIKYEVDKVIHGLACCIM.

The F-box domain occupies 30–75 (FGCLTINIYLKIFTLISTPDLCNCRLVCRKFQQLCDYNSIYVKKLL). The disordered stretch occupies residues 101–122 (MSSNTSKGFHLQSSDKKYADSD). A compositionally biased stretch (basic and acidic residues) spans 113–122 (SSDKKYADSD).

Interacts with skp1. Forms a complex with pof6 and skp1.

The protein localises to the cytoplasm. It is found in the nucleus. Its function is as follows. Together with skp1, essential for septum processing and cell separation. The polypeptide is F-box protein pof6 (pof6) (Schizosaccharomyces pombe (strain 972 / ATCC 24843) (Fission yeast)).